Consider the following 301-residue polypeptide: Glycine--tRNA ligase alpha subunit (301 aa).

This sequence belongs to the class-II aminoacyl-tRNA synthetase family. In terms of assembly, tetramer of two alpha and two beta subunits.

It is found in the cytoplasm. The catalysed reaction is tRNA(Gly) + glycine + ATP = glycyl-tRNA(Gly) + AMP + diphosphate. In Shewanella amazonensis (strain ATCC BAA-1098 / SB2B), this protein is Glycine--tRNA ligase alpha subunit.